The chain runs to 153 residues: Lysine-acyltransferase RtxC (153 aa).

Histidine 32 is an active-site residue.

The protein belongs to the RTX toxin acyltransferase family.

The protein resides in the cytoplasm. The enzyme catalyses a fatty acyl-[ACP] + L-lysyl-[protein] = N(6)-(fatty acyl)-L-lysyl-[protein] + holo-[ACP] + H(+). Functionally, catalyzes fatty acylation of the protoxin (RtxA) at internal lysine residues, thereby converting it to the active toxin. This is Lysine-acyltransferase RtxC (rtxC) from Vibrio cholerae serotype O1 (strain ATCC 39315 / El Tor Inaba N16961).